The primary structure comprises 445 residues: FAS-associated factor 2-A (445 aa).

Positions 12–53 constitute a UBA domain; that stretch reads EQTEKLLQFQDLTGIESMDQCRQTLQQHNWNIEAAVQDRLNE. Residues 275–353 are a coiled coil; it reads SERLEREERN…ERKSECLPAE (79 aa). Positions 302-354 are disordered; sequence RADQEKERKKKEKQEQKRREEEEAQRKQMLEERKKRNLEEEKERKSECLPAEP. Positions 303 to 348 are enriched in basic and acidic residues; sequence ADQEKERKKKEKQEQKRREEEEAQRKQMLEERKKRNLEEEKERKSE. The 83-residue stretch at 357-439 folds into the UBX domain; sequence DHPDNVKIIF…GLSQSQLLFV (83 aa).

Its subcellular location is the cytoplasm. The protein localises to the lipid droplet. The protein resides in the endoplasmic reticulum. Functionally, plays an important role in endoplasmic reticulum-associated degradation (ERAD) that mediates ubiquitin-dependent degradation of misfolded endoplasmic reticulum proteins. Involved in inhibition of lipid droplet degradation. Involved in stress granule disassembly. The polypeptide is FAS-associated factor 2-A (faf2-a) (Xenopus laevis (African clawed frog)).